Here is a 439-residue protein sequence, read N- to C-terminus: Paraneoplastic antigen-like protein 8A (439 aa).

A disordered region spans residues 208-439 (SALKAETPNN…RRATNESRKV (232 aa)). Residues 231–249 (LVRRAGAKSRSRRKKQKKN) are compositionally biased toward basic residues. Composition is skewed to basic and acidic residues over residues 314 to 326 (GPRE…RAEA), 395 to 404 (SRREASDQKA), and 423 to 439 (AKPE…SRKV).

The protein belongs to the PNMA family.

In Homo sapiens (Human), this protein is Paraneoplastic antigen-like protein 8A.